The primary structure comprises 563 residues: Methylcrotonoyl-CoA carboxylase beta chain, mitochondrial (563 aa).

The N-terminal 22 residues, 1–22, are a transit peptide targeting the mitochondrion; it reads MWGALRSVLRPCSRASVPRQRA. One can recognise a CoA carboxyltransferase N-terminal domain in the interval 49–306; the sequence is MKALVNQLHE…QKKLDVTVEP (258 aa). Residues 49–555 form a carboxyltransferase region; sequence MKALVNQLHE…SAALNAPIQR (507 aa). The residue at position 70 (lysine 70) is an N6-acetyllysine; alternate. Residue lysine 70 is modified to N6-succinyllysine; alternate. Lysine 141 bears the N6-succinyllysine mark. In terms of domain architecture, CoA carboxyltransferase C-terminal spans 309-555; that stretch reads EPLFPADELY…SAALNAPIQR (247 aa). Positions 343-372 are acyl-CoA binding; sequence RFNEFKALYGDTLVTGFARIFGYPVGIIGN. Lysine 433 carries the post-translational modification N6-succinyllysine. An N6-acetyllysine; alternate modification is found at lysine 495. Lysine 495 carries the post-translational modification N6-succinyllysine; alternate. Position 511 is an N6-acetyllysine (lysine 511).

The protein belongs to the AccD/PCCB family. In terms of assembly, probably a dodecamer composed of six biotin-containing alpha subunits (MCCC1) and six beta (MCCC2) subunits.

The protein localises to the mitochondrion matrix. It carries out the reaction 3-methylbut-2-enoyl-CoA + hydrogencarbonate + ATP = 3-methyl-(2E)-glutaconyl-CoA + ADP + phosphate + H(+). It functions in the pathway amino-acid degradation; L-leucine degradation; (S)-3-hydroxy-3-methylglutaryl-CoA from 3-isovaleryl-CoA: step 2/3. In terms of biological role, carboxyltransferase subunit of the 3-methylcrotonyl-CoA carboxylase, an enzyme that catalyzes the conversion of 3-methylcrotonyl-CoA to 3-methylglutaconyl-CoA, a critical step for leucine and isovaleric acid catabolism. The protein is Methylcrotonoyl-CoA carboxylase beta chain, mitochondrial (Mccc2) of Rattus norvegicus (Rat).